An 83-amino-acid polypeptide reads, in one-letter code: Small ribosomal subunit protein uS17 (83 aa).

This sequence belongs to the universal ribosomal protein uS17 family. Part of the 30S ribosomal subunit.

In terms of biological role, one of the primary rRNA binding proteins, it binds specifically to the 5'-end of 16S ribosomal RNA. In Chlamydia trachomatis serovar L2 (strain ATCC VR-902B / DSM 19102 / 434/Bu), this protein is Small ribosomal subunit protein uS17.